The primary structure comprises 353 residues: Guanine nucleotide-binding protein subunit beta-5 (353 aa).

WD repeat units lie at residues G61–A100, M103–M142, M151–H192, H194–E236, T237–I276, S278–I320, and G323–W352.

It belongs to the WD repeat G protein beta family. As to quaternary structure, component of a complex composed of RGS9 (isoform RGS9-1), GNB5 and RGS9BP; within this complex, the presence of GNB5 stabilizes both itself and RGS9 and increases RGS9 GTPase-activating protein (GAP) activity. Interacts with RGS7, forming the RGS7-GNB5 complex; within this complex, the presence of GNB5 increases RGS7 GTPase-activating protein (GAP) activity. Interacts with GPR158; promotes the GTPase activator activity of the RGS7-GNB5 complex in absence of glycine, in contrast GTPase activator activity of the RGS7-GNB5 complex is inhibited in presence of glycine. Interacts with RGS6.

The protein resides in the membrane. Enhances GTPase-activating protein (GAP) activity of regulator of G protein signaling (RGS) proteins, such as RGS7 and RGS9, hence involved in the termination of the signaling initiated by the G protein coupled receptors (GPCRs) by accelerating the GTP hydrolysis on the G-alpha subunits, thereby promoting their inactivation. Increases RGS7 GTPase-activating protein (GAP) activity, thereby regulating mood and cognition. Increases RGS9 GTPase-activating protein (GAP) activity, hence contributes to the deactivation of G protein signaling initiated by D(2) dopamine receptors. May play an important role in neuronal signaling, including in the parasympathetic, but not sympathetic, control of heart rate. This chain is Guanine nucleotide-binding protein subunit beta-5 (GNB5), found in Oryctolagus cuniculus (Rabbit).